The primary structure comprises 389 residues: LL-diaminopimelate aminotransferase (389 aa).

Residues Tyr13 and Gly38 each contribute to the substrate site. Residues Tyr67, 101–102 (SK), Tyr126, Asn176, Tyr207, and 235–237 (SLS) each bind pyridoxal 5'-phosphate. Residues Lys102, Tyr126, and Asn176 each coordinate substrate. Lys238 carries the post-translational modification N6-(pyridoxal phosphate)lysine. A pyridoxal 5'-phosphate-binding site is contributed by Arg246. Arg364 serves as a coordination point for substrate.

It belongs to the class-I pyridoxal-phosphate-dependent aminotransferase family. LL-diaminopimelate aminotransferase subfamily. As to quaternary structure, homodimer. It depends on pyridoxal 5'-phosphate as a cofactor.

The catalysed reaction is (2S,6S)-2,6-diaminopimelate + 2-oxoglutarate = (S)-2,3,4,5-tetrahydrodipicolinate + L-glutamate + H2O + H(+). The protein operates within amino-acid biosynthesis; L-lysine biosynthesis via DAP pathway; LL-2,6-diaminopimelate from (S)-tetrahydrodipicolinate (aminotransferase route): step 1/1. In terms of biological role, involved in the synthesis of meso-diaminopimelate (m-DAP or DL-DAP), required for both lysine and peptidoglycan biosynthesis. Catalyzes the direct conversion of tetrahydrodipicolinate to LL-diaminopimelate. The protein is LL-diaminopimelate aminotransferase of Halothermothrix orenii (strain H 168 / OCM 544 / DSM 9562).